A 104-amino-acid chain; its full sequence is uncharacterized protein (104 aa).

This is an uncharacterized protein from Escherichia coli (strain K12).